The primary structure comprises 298 residues: Calcium-binding protein 1 (298 aa).

The span at 1–10 shows a compositional bias: basic and acidic residues; that stretch reads MSSHIAKSES. Residues 1 to 131 form a disordered region; sequence MSSHIAKSES…APAGTPEADP (131 aa). Ser2 carries the N-myristoyl glycine lipid modification. Residue His4 is the site of S-palmitoyl cysteine attachment. Low complexity predominate over residues 11–25; the sequence is KTSLLKAAAASGGSR. EF-hand domains lie at 153 to 188, 207 to 224, 230 to 265, and 267 to 298; these read EEIE…MGYM, GHVD…KLLA, IGVK…LLGH, and VGHR…MMSR. Residues Asp166, Asp168, Asp170, Tyr172, and Asp177 each contribute to the Ca(2+) site. Positions 243, 245, 247, and 249 each coordinate Ca(2+). The residue at position 251 (Ser251) is a Phosphoserine. Residues Glu254, Asp280, Asn282, Asp284, Arg286, and Glu291 each contribute to the Ca(2+) site.

Interacts with ITPR1, ITPR2 and ITPR3. The strength of this interaction inversely correlates with calcium concentration. Interacts with CACNA1A (via C-terminal CDB motif) in the pre- and postsynaptic membranes. Interacts with CACNA1C. Interacts with CACNA1D. Interacts (via EF-hands 1 and 2) at microtubules with MAP1LC3B. Interacts (via EF-hands 1 and 2) with NSMF (via the central NLS-containing motif region), the interaction occurs in a calcium dependent manner after synaptic NMDA receptor stimulation and prevents nuclear import of NSMF. Interacts with MYO1C and TRPC5. Interacts with SPACA9. In terms of processing, phosphorylated. The phosphorylation regulates the activity. As to expression, somatodendritic compartment of neurons. Restricted expression in retina to a subpopulation of amacrine, bipolar, and ganglion cells. According to PubMed:11906216, expression is heterogeneous within brain regions and their major cell types and does not match with those of marker proteins for characterized neuronal subpopulations. Isoform 2: Minor isoform expressed in the brain, in the granule cell layer of the cerebellum, at low level. Not developmentally regulated. Isoform 3: Minor isoform expressed in the brain, in the granule cell layer. of the cerebellum, at low level. Not developmentally regulated.

It localises to the cytoplasm. The protein localises to the cytoskeleton. Modulates calcium-dependent activity of inositol 1,4,5-triphosphate receptors (ITPRs). Inhibits agonist-induced intracellular calcium signaling. Enhances inactivation and does not support calcium-dependent facilitation of voltage-dependent P/Q-type calcium channels. Causes calcium-dependent facilitation and inhibits inactivation of L-type calcium channels by binding to the same sites as calmodulin in the C-terminal domain of CACNA1C, but has an opposite effect on channel function. Suppresses the calcium-dependent inactivation of CACNA1D. Inhibits TRPC5 channels. Prevents NMDA receptor-induced cellular degeneration. Required for the normal transfer of light signals through the retina. The chain is Calcium-binding protein 1 (Cabp1) from Rattus norvegicus (Rat).